We begin with the raw amino-acid sequence, 323 residues long: Oligodendrocyte transcription factor 2 (323 aa).

A compositionally biased stretch (polar residues) spans 1–13 (MDSDASLVSSRPS). The disordered stretch occupies residues 1–107 (MDSDASLVSS…KKQMTEPELQ (107 aa)). Residues 77 to 93 (SSSSSTSSSTSSAATSS) show a composition bias toward low complexity. A bHLH domain is found at 108–162 (QLRLKINSRERKRMHDLNIAMDGLREVMPYAHGPSVRKLSKIATLLLARNYILML).

In terms of assembly, interacts with NKX2-2. Interacts with ZNF488. In terms of tissue distribution, expressed specifically in the brain.

The protein localises to the nucleus. It localises to the cytoplasm. Required for oligodendrocyte and motor neuron specification in the spinal cord, as well as for the development of somatic motor neurons in the hindbrain. Functions together with ZNF488 to promote oligodendrocyte differentiation. Cooperates with OLIG1 to establish the pMN domain of the embryonic neural tube. Antagonist of V2 interneuron and of NKX2-2-induced V3 interneuron development. The protein is Oligodendrocyte transcription factor 2 (Olig2) of Mus musculus (Mouse).